The sequence spans 229 residues: Large ribosomal subunit protein uL1 (229 aa).

It belongs to the universal ribosomal protein uL1 family. As to quaternary structure, part of the 50S ribosomal subunit.

In terms of biological role, binds directly to 23S rRNA. The L1 stalk is quite mobile in the ribosome, and is involved in E site tRNA release. Its function is as follows. Protein L1 is also a translational repressor protein, it controls the translation of the L11 operon by binding to its mRNA. In Pelagibacter ubique (strain HTCC1062), this protein is Large ribosomal subunit protein uL1.